We begin with the raw amino-acid sequence, 31 residues long: AGNAKMSALMALTIRGCCSHPVCSAMSPICG.

Residues 1 to 15 (AGNAKMSALMALTIR) constitute a propeptide that is removed on maturation. 2 cysteine pairs are disulfide-bonded: Cys17–Cys23 and Cys18–Cys30. The residue at position 30 (Cys30) is a Cysteine amide.

This sequence belongs to the conotoxin A superfamily. Expressed by the venom duct.

It localises to the secreted. Functionally, alpha-conotoxins act on postsynaptic membranes, they bind to the nicotinic acetylcholine receptors (nAChR) and thus inhibit them. This toxin inhibits alpha-3-beta-4, alpha-6/alpha-3-beta-4, and alpha-2-beta-4 nAChRs. The polypeptide is Alpha-conotoxin Li1.12 (Conus lividus (Livid cone)).